The sequence spans 413 residues: Tyrosine--tRNA ligase (413 aa).

The 'HIGH' region motif lies at 59–68 (PTAPDIHIGH). The 'KMSKS' region signature appears at 243-247 (KMSKS). Lys246 lines the ATP pocket. One can recognise an S4 RNA-binding domain in the interval 351 to 411 (LAIGQLLKQA…GKRRFARVTL (61 aa)).

Belongs to the class-I aminoacyl-tRNA synthetase family. TyrS type 2 subfamily. As to quaternary structure, homodimer.

The protein localises to the cytoplasm. It catalyses the reaction tRNA(Tyr) + L-tyrosine + ATP = L-tyrosyl-tRNA(Tyr) + AMP + diphosphate + H(+). Functionally, catalyzes the attachment of tyrosine to tRNA(Tyr) in a two-step reaction: tyrosine is first activated by ATP to form Tyr-AMP and then transferred to the acceptor end of tRNA(Tyr). The sequence is that of Tyrosine--tRNA ligase from Burkholderia lata (strain ATCC 17760 / DSM 23089 / LMG 22485 / NCIMB 9086 / R18194 / 383).